The following is an 83-amino-acid chain: Small ribosomal subunit protein bS16 (83 aa).

The protein belongs to the bacterial ribosomal protein bS16 family.

The polypeptide is Small ribosomal subunit protein bS16 (Chromobacterium violaceum (strain ATCC 12472 / DSM 30191 / JCM 1249 / CCUG 213 / NBRC 12614 / NCIMB 9131 / NCTC 9757 / MK)).